The following is a 466-amino-acid chain: Cytochrome c-552 (466 aa).

The signal sequence occupies residues Met-1–Ala-27. His-87 lines the heme c pocket. Residues Cys-115, Cys-118, and Lys-119 each coordinate heme. The heme c site is built by Cys-153, Cys-156, His-157, Cys-195, Cys-198, and His-199. Ca(2+) contacts are provided by Glu-201, Tyr-202, Lys-250, and Gln-252. A substrate-binding site is contributed by Tyr-202. His-253 lines the substrate pocket. 9 residues coordinate heme c: His-264, Cys-271, Cys-274, His-275, His-290, Cys-303, Cys-306, His-307, and His-382.

It belongs to the cytochrome c-552 family. Ca(2+) serves as cofactor. Heme c is required as a cofactor.

It localises to the periplasm. The enzyme catalyses 6 Fe(III)-[cytochrome c] + NH4(+) + 2 H2O = 6 Fe(II)-[cytochrome c] + nitrite + 8 H(+). It functions in the pathway nitrogen metabolism; nitrate reduction (assimilation). In terms of biological role, catalyzes the reduction of nitrite to ammonia, consuming six electrons in the process. This is Cytochrome c-552 from Shewanella sediminis (strain HAW-EB3).